The following is a 93-amino-acid chain: uncharacterized protein (93 aa).

Residues 26 to 73 (NRGTIFRPMTRNSGIVGRRGGPVAPAPFRNNVQKPGTRPPGFKPPSGV) form a disordered region.

This is an uncharacterized protein from Caenorhabditis elegans.